We begin with the raw amino-acid sequence, 605 residues long: Isocitrate dehydrogenase kinase/phosphatase (605 aa).

ATP contacts are provided by residues 327–333 (APGIKGL) and Lys348. Asp383 is an active-site residue.

This sequence belongs to the AceK family.

It localises to the cytoplasm. It catalyses the reaction L-seryl-[isocitrate dehydrogenase] + ATP = O-phospho-L-seryl-[isocitrate dehydrogenase] + ADP + H(+). Functionally, bifunctional enzyme which can phosphorylate or dephosphorylate isocitrate dehydrogenase (IDH) on a specific serine residue. This is a regulatory mechanism which enables bacteria to bypass the Krebs cycle via the glyoxylate shunt in response to the source of carbon. When bacteria are grown on glucose, IDH is fully active and unphosphorylated, but when grown on acetate or ethanol, the activity of IDH declines drastically concomitant with its phosphorylation. This Burkholderia orbicola (strain AU 1054) protein is Isocitrate dehydrogenase kinase/phosphatase.